The sequence spans 709 residues: UvrABC system protein B (709 aa).

The Helicase ATP-binding domain maps to 35–416 (ERVEAGEKDV…YELGQADGYV (382 aa)). 48-55 (GATGTGKS) contacts ATP. The Beta-hairpin signature appears at 101–124 (YYDYYQPEAYVPQTDTFIEKDSSI). In terms of domain architecture, Helicase C-terminal spans 438–604 (QIDDLLEQIR…PLRKRIADIT (167 aa)). Residues 666-701 (ADLIEQMSQQMHQAAADLQFELAARLRDEVGELKKE) enclose the UVR domain.

This sequence belongs to the UvrB family. Forms a heterotetramer with UvrA during the search for lesions. Interacts with UvrC in an incision complex.

It localises to the cytoplasm. Its function is as follows. The UvrABC repair system catalyzes the recognition and processing of DNA lesions. A damage recognition complex composed of 2 UvrA and 2 UvrB subunits scans DNA for abnormalities. Upon binding of the UvrA(2)B(2) complex to a putative damaged site, the DNA wraps around one UvrB monomer. DNA wrap is dependent on ATP binding by UvrB and probably causes local melting of the DNA helix, facilitating insertion of UvrB beta-hairpin between the DNA strands. Then UvrB probes one DNA strand for the presence of a lesion. If a lesion is found the UvrA subunits dissociate and the UvrB-DNA preincision complex is formed. This complex is subsequently bound by UvrC and the second UvrB is released. If no lesion is found, the DNA wraps around the other UvrB subunit that will check the other stand for damage. This chain is UvrABC system protein B, found in Micrococcus luteus (strain ATCC 4698 / DSM 20030 / JCM 1464 / CCM 169 / CCUG 5858 / IAM 1056 / NBRC 3333 / NCIMB 9278 / NCTC 2665 / VKM Ac-2230) (Micrococcus lysodeikticus).